Reading from the N-terminus, the 117-residue chain is Antimicrobial peptide AmAMP1 (117 aa).

Positions 1 to 25 are cleaved as a signal peptide; it reads MPSIRVLFVLLAVILLFMEVKMTSA. Residues 26 to 73 constitute a propeptide that is removed on maturation; sequence ASIVKDVDEDETLENEDGEAMENSWPWHGVEDTSDYSDLSDLANSEKR. 3 cysteine pairs are disulfide-bonded: Cys76–Cys115, Cys85–Cys108, and Cys94–Cys112.

This sequence belongs to the coral AMP family.

It is found in the secreted. Its function is as follows. Coral peptide that probably acts as an antimicrobial peptide in the surface mucous layer of planula larvae and likely also in adults. Shows moderate to high activity against some Gram-negative and Gram-positive bacteria (tested on E.coli, B.megaterium, S.aureus, E.aesturaii, B.algicola, Acinetobacter spec.). Does not show antibacterial activity against the coral pathogen V.coralliilyticus. The polypeptide is Antimicrobial peptide AmAMP1 (Acropora millepora (Staghorn coral)).